The chain runs to 257 residues: Imidazole glycerol phosphate synthase subunit HisF (257 aa).

Residues aspartate 11 and aspartate 130 contribute to the active site.

This sequence belongs to the HisA/HisF family. As to quaternary structure, heterodimer of HisH and HisF.

It localises to the cytoplasm. The enzyme catalyses 5-[(5-phospho-1-deoxy-D-ribulos-1-ylimino)methylamino]-1-(5-phospho-beta-D-ribosyl)imidazole-4-carboxamide + L-glutamine = D-erythro-1-(imidazol-4-yl)glycerol 3-phosphate + 5-amino-1-(5-phospho-beta-D-ribosyl)imidazole-4-carboxamide + L-glutamate + H(+). It functions in the pathway amino-acid biosynthesis; L-histidine biosynthesis; L-histidine from 5-phospho-alpha-D-ribose 1-diphosphate: step 5/9. Functionally, IGPS catalyzes the conversion of PRFAR and glutamine to IGP, AICAR and glutamate. The HisF subunit catalyzes the cyclization activity that produces IGP and AICAR from PRFAR using the ammonia provided by the HisH subunit. This Shewanella woodyi (strain ATCC 51908 / MS32) protein is Imidazole glycerol phosphate synthase subunit HisF.